The primary structure comprises 136 residues: Small ribosomal subunit protein bS6 (136 aa).

The segment at 96–136 (VTEPSALARSGSDAEADRAPADEGSVEAAGAEPGSEAEAEA) is disordered.

It belongs to the bacterial ribosomal protein bS6 family.

Functionally, binds together with bS18 to 16S ribosomal RNA. The polypeptide is Small ribosomal subunit protein bS6 (Methylococcus capsulatus (strain ATCC 33009 / NCIMB 11132 / Bath)).